Consider the following 615-residue polypeptide: Deoxyribodipyrimidine photo-lyase (615 aa).

A disordered region spans residues 1-53 (MAPSKRKASAPPQTSHVNGNPSADKKRKTTTDAPPTNPNTSSDPLRAPHPFYK). Over residues 11-21 (PPQTSHVNGNP) the composition is skewed to polar residues. Positions 31–40 (TDAPPTNPNT) are enriched in low complexity. The region spanning 108–249 (QAVVHWFKMD…AADVVHDTCV (142 aa)) is the Photolyase/cryptochrome alpha/beta domain. Y352 serves as a coordination point for FAD. R356 provides a ligand contact to DNA. 364–368 (TSNLS) is an FAD binding site. Interaction with DNA regions lie at residues 407–414 (EVAWRDFY) and 474–475 (NR). 505 to 507 (DGD) contributes to the FAD binding site. Q537 contacts DNA.

The protein belongs to the DNA photolyase class-1 family. As to quaternary structure, monomer. FAD serves as cofactor. (6R)-5,10-methylene-5,6,7,8-tetrahydrofolate is required as a cofactor.

The enzyme catalyses cyclobutadipyrimidine (in DNA) = 2 pyrimidine residues (in DNA).. In terms of biological role, involved in repair of UV radiation-induced DNA damage. Catalyzes the light-dependent monomerization (300-600 nm) of cyclobutyl pyrimidine dimers (in cis-syn configuration), which are formed between adjacent bases on the same DNA strand upon exposure to ultraviolet radiation. In Neurospora crassa (strain ATCC 24698 / 74-OR23-1A / CBS 708.71 / DSM 1257 / FGSC 987), this protein is Deoxyribodipyrimidine photo-lyase (phr).